The primary structure comprises 402 residues: MTTIGTPLSPRATRVMLLGSGELGREVLIALQRLGVETIAVDRYENAPGHQIAHHARVISMTDPEQLRALIEAEKPDLVVPEIEAIATATLEALETEGVVRVIPTARAARLTMDREGIRRLAAETLGLPTSPYQFCGSLDELQAAIDPESGGVGYPCVVKPLMSSSGKGQSKLDGPADVEKAWDYAMAGSRVTNNRVIVEGFVDFDYEITLLTVRALGDDGEVETSFCAPIGHRQANGDYVESWQPHPMTEAALRSAQHIARSVTENLGGQGIFGVELFIKGDQVYFSEVSPRPHDTGMVTMITQWQNEFELHARAILGLPVDTTLKSAGASAVIYGGVEAQGVVFDGVDEALRVPRTELRLFGKPESFITRRMGVALARDEDVDTARRNAAEAAGRVRVSG.

N(1)-(5-phospho-beta-D-ribosyl)glycinamide contacts are provided by residues glutamate 22–leucine 23 and glutamate 82. ATP is bound by residues arginine 115, lysine 160, serine 165–glutamine 170, glutamate 200–valine 203, and glutamate 208. The 199-residue stretch at arginine 120 to leucine 318 folds into the ATP-grasp domain. Mg(2+) contacts are provided by glutamate 277 and glutamate 289. N(1)-(5-phospho-beta-D-ribosyl)glycinamide-binding positions include aspartate 296, lysine 365, and arginine 372–arginine 373.

Belongs to the PurK/PurT family. In terms of assembly, homodimer.

It catalyses the reaction N(1)-(5-phospho-beta-D-ribosyl)glycinamide + formate + ATP = N(2)-formyl-N(1)-(5-phospho-beta-D-ribosyl)glycinamide + ADP + phosphate + H(+). Its pathway is purine metabolism; IMP biosynthesis via de novo pathway; N(2)-formyl-N(1)-(5-phospho-D-ribosyl)glycinamide from N(1)-(5-phospho-D-ribosyl)glycinamide (formate route): step 1/1. Involved in the de novo purine biosynthesis. Catalyzes the transfer of formate to 5-phospho-ribosyl-glycinamide (GAR), producing 5-phospho-ribosyl-N-formylglycinamide (FGAR). Formate is provided by PurU via hydrolysis of 10-formyl-tetrahydrofolate. The polypeptide is Formate-dependent phosphoribosylglycinamide formyltransferase (Mycobacteroides abscessus (strain ATCC 19977 / DSM 44196 / CCUG 20993 / CIP 104536 / JCM 13569 / NCTC 13031 / TMC 1543 / L948) (Mycobacterium abscessus)).